A 449-amino-acid polypeptide reads, in one-letter code: Chromosomal replication initiator protein DnaA (449 aa).

Residues 1–69 (MEKVWLEAQS…VEAISSLTSV (69 aa)) form a domain I, interacts with DnaA modulators region. The domain II stretch occupies residues 69 to 112 (VKYQIEFKITEKIPLESKPVDNFTPVIKDNEPSKETNKNIDITA). Residues 113–329 (NLNPKYTFDS…GMLIRLGAYA (217 aa)) are domain III, AAA+ region. ATP is bound by residues Gly-157, Gly-159, Lys-160, and Thr-161. Positions 330–449 (SLTGSEITLN…VENLKKELIT (120 aa)) are domain IV, binds dsDNA.

The protein belongs to the DnaA family. As to quaternary structure, oligomerizes as a right-handed, spiral filament on DNA at oriC.

Its subcellular location is the cytoplasm. In terms of biological role, plays an essential role in the initiation and regulation of chromosomal replication. ATP-DnaA binds to the origin of replication (oriC) to initiate formation of the DNA replication initiation complex once per cell cycle. Binds the DnaA box (a 9 base pair repeat at the origin) and separates the double-stranded (ds)DNA. Forms a right-handed helical filament on oriC DNA; dsDNA binds to the exterior of the filament while single-stranded (ss)DNA is stabiized in the filament's interior. The ATP-DnaA-oriC complex binds and stabilizes one strand of the AT-rich DNA unwinding element (DUE), permitting loading of DNA polymerase. After initiation quickly degrades to an ADP-DnaA complex that is not apt for DNA replication. Binds acidic phospholipids. This chain is Chromosomal replication initiator protein DnaA, found in Geotalea uraniireducens (strain Rf4) (Geobacter uraniireducens).